Reading from the N-terminus, the 159-residue chain is Na(+)/H(+) antiporter subunit E1 (159 aa).

Transmembrane regions (helical) follow at residues 1 to 21, 27 to 47, 49 to 69, and 101 to 121; these read MAVQLVLNFIIAVFWLFVTNS, FVLGFIFGLVLVYLLHRVLPG, FYVITLYRIIKLVIIFLIELI, and WQIVLLSNLITLTPGTVVLGV.

Belongs to the CPA3 antiporters (TC 2.A.63) subunit E family. May form a heterooligomeric complex that consists of seven subunits: mnhA1, mnhB1, mnhC1, mnhD1, mnhE1, mnhF1 and mnhG1.

Its subcellular location is the cell membrane. Its function is as follows. Mnh complex is a Na(+)/H(+) antiporter involved in Na(+) excretion. This is Na(+)/H(+) antiporter subunit E1 (mnhE1) from Staphylococcus aureus (strain Mu3 / ATCC 700698).